A 299-amino-acid polypeptide reads, in one-letter code: 21S rRNA pseudouridine(2819) synthase (299 aa).

Residue D106 is part of the active site.

The protein belongs to the pseudouridine synthase RluA family.

The protein localises to the mitochondrion. It carries out the reaction uridine(2819) in 21S rRNA = pseudouridine(2819) in 21S rRNA. Functionally, pseudouridylate synthase responsible for the pseudouridine-2819 formation in mitochondrial 21S rRNA. May modulate the efficiency or the fidelity of the mitochondrial translation machinery. This chain is 21S rRNA pseudouridine(2819) synthase (PUS5), found in Kluyveromyces lactis (strain ATCC 8585 / CBS 2359 / DSM 70799 / NBRC 1267 / NRRL Y-1140 / WM37) (Yeast).